The sequence spans 278 residues: Tryptophan synthase alpha chain (278 aa).

Catalysis depends on proton acceptor residues E50 and D61.

It belongs to the TrpA family. As to quaternary structure, tetramer of two alpha and two beta chains.

It carries out the reaction (1S,2R)-1-C-(indol-3-yl)glycerol 3-phosphate + L-serine = D-glyceraldehyde 3-phosphate + L-tryptophan + H2O. The protein operates within amino-acid biosynthesis; L-tryptophan biosynthesis; L-tryptophan from chorismate: step 5/5. The alpha subunit is responsible for the aldol cleavage of indoleglycerol phosphate to indole and glyceraldehyde 3-phosphate. In Methylobacterium nodulans (strain LMG 21967 / CNCM I-2342 / ORS 2060), this protein is Tryptophan synthase alpha chain.